Here is a 236-residue protein sequence, read N- to C-terminus: Uridylate kinase (236 aa).

12–15 contacts ATP; sequence KISG. Positions 20 to 25 are involved in allosteric activation by GTP; it reads GTNGYG. Glycine 54 is a UMP binding site. ATP contacts are provided by glycine 55 and arginine 59. UMP is bound by residues aspartate 72 and 133-140; that span reads TGNPYFST. Tyrosine 166 and aspartate 169 together coordinate ATP.

The protein belongs to the UMP kinase family. In terms of assembly, homohexamer.

It localises to the cytoplasm. It carries out the reaction UMP + ATP = UDP + ADP. It functions in the pathway pyrimidine metabolism; CTP biosynthesis via de novo pathway; UDP from UMP (UMPK route): step 1/1. Allosterically activated by GTP. Inhibited by UTP. In terms of biological role, catalyzes the reversible phosphorylation of UMP to UDP. In Clostridium acetobutylicum (strain ATCC 824 / DSM 792 / JCM 1419 / IAM 19013 / LMG 5710 / NBRC 13948 / NRRL B-527 / VKM B-1787 / 2291 / W), this protein is Uridylate kinase.